A 289-amino-acid polypeptide reads, in one-letter code: Phosphoribulokinase (289 aa).

12 to 20 (GSSGAGTTT) provides a ligand contact to ATP.

Belongs to the phosphoribulokinase family.

The enzyme catalyses D-ribulose 5-phosphate + ATP = D-ribulose 1,5-bisphosphate + ADP + H(+). It participates in carbohydrate biosynthesis; Calvin cycle. The protein is Phosphoribulokinase (cbbP) of Sinorhizobium medicae (strain WSM419) (Ensifer medicae).